The following is a 603-amino-acid chain: MNHIRNFSIIAHIDHGKSTLADRLIQRCGGLQDREMSAQVLDSMDIEKERGITIKAQTASLKYKALDGQVYNLNLIDTPGHVDFSYEVSRSLSACEGALLVVDASQGVEAQTVANCYTALDLGVTVVPVLNKMDLPQADPDNAKQEIEEVIGIDATDAIPCSAKTGMGIDEILEAVVALIPAPKGNPDAALRAMIIDSWYDAYVGVVMLVRVVDGRLAKGDRIKLMASEATYNAEQLGVFTPHTEARQALEAGEVGFVIAGIKELQAARVGDTVTLIKGGTGGAAFTATEALPGFKEIQPQVFAGLYPSEASEYESLRDALEKLKLNDASLHYEPEVSEALGFGFRCGFLGLLHMEIVQERLEREFDQDLITTAPSVVYEVLKADGTTIKVENPSKIPDAGRVNEIREPIVTVHLYMPQDYVGAVMTLANQKRGVQLNMAYHGKQVMLTYEMPLGEIVLDFFDKLKSVSRGYASMDYEFKEFRASDVVKVDILLNGEKVDALSIIVHRSQSAYRGRAVVAKMREIISRQQFDVAIQAAIGANIIARETIKALRKNVIAKCYGGDISRKKKLLEKQKAGKKRMKQIGSVEVPQEAFLAILQVED.

The 183-residue stretch at 2–184 folds into the tr-type G domain; sequence NHIRNFSIIA…AVVALIPAPK (183 aa). GTP contacts are provided by residues 14-19 and 131-134; these read DHGKST and NKMD.

This sequence belongs to the TRAFAC class translation factor GTPase superfamily. Classic translation factor GTPase family. LepA subfamily.

Its subcellular location is the cell inner membrane. The catalysed reaction is GTP + H2O = GDP + phosphate + H(+). Functionally, required for accurate and efficient protein synthesis under certain stress conditions. May act as a fidelity factor of the translation reaction, by catalyzing a one-codon backward translocation of tRNAs on improperly translocated ribosomes. Back-translocation proceeds from a post-translocation (POST) complex to a pre-translocation (PRE) complex, thus giving elongation factor G a second chance to translocate the tRNAs correctly. Binds to ribosomes in a GTP-dependent manner. The protein is Elongation factor 4 of Polaromonas naphthalenivorans (strain CJ2).